The chain runs to 92 residues: Large ribosomal subunit protein bL31 (92 aa).

The disordered stretch occupies residues 66-92; sequence GMGSANPDVDAPAPKKAAKKSDAESDS. Residues 70–80 are compositionally biased toward low complexity; the sequence is ANPDVDAPAPK.

The protein belongs to the bacterial ribosomal protein bL31 family. Type A subfamily. Part of the 50S ribosomal subunit.

In terms of biological role, binds the 23S rRNA. This chain is Large ribosomal subunit protein bL31, found in Synechococcus sp. (strain RCC307).